Here is a 151-residue protein sequence, read N- to C-terminus: D-aminoacyl-tRNA deacylase (151 aa).

A Gly-cisPro motif, important for rejection of L-amino acids motif is present at residues 137 to 138; that stretch reads GP.

It belongs to the DTD family. In terms of assembly, homodimer.

It localises to the cytoplasm. It carries out the reaction glycyl-tRNA(Ala) + H2O = tRNA(Ala) + glycine + H(+). The catalysed reaction is a D-aminoacyl-tRNA + H2O = a tRNA + a D-alpha-amino acid + H(+). Its function is as follows. An aminoacyl-tRNA editing enzyme that deacylates mischarged D-aminoacyl-tRNAs. Also deacylates mischarged glycyl-tRNA(Ala), protecting cells against glycine mischarging by AlaRS. Acts via tRNA-based rather than protein-based catalysis; rejects L-amino acids rather than detecting D-amino acids in the active site. By recycling D-aminoacyl-tRNA to D-amino acids and free tRNA molecules, this enzyme counteracts the toxicity associated with the formation of D-aminoacyl-tRNA entities in vivo and helps enforce protein L-homochirality. This is D-aminoacyl-tRNA deacylase from Geobacter metallireducens (strain ATCC 53774 / DSM 7210 / GS-15).